Here is a 690-residue protein sequence, read N- to C-terminus: Calpain-9 (690 aa).

Positions 1–24 (MPYLYRAPGPQAHPVPKDARITHS) are disordered. Residues 42–337 (LFEDADFPAS…FDKVEICNLT (296 aa)) enclose the Calpain catalytic domain. Residues Leu-81, Gly-83, and Asp-88 each coordinate Ca(2+). The active site involves Cys-97. Glu-167 lines the Ca(2+) pocket. Residues His-254 and Asn-278 contribute to the active site. Ca(2+)-binding residues include Glu-284, Asp-291, Leu-312, Asp-314, and Glu-316. Residues 338 to 521 (PDALEEDAIH…PPDQETEEEQ (184 aa)) form a domain III region. The interval 498–519 (GNVDIDLPEPPKPTPPDQETEE) is disordered. 3 consecutive EF-hand domains span residues 518–552 (EEEQ…VLQK), 561–589 (LSLI…FKVF), and 591–626 (DKLK…AGFQ). Residues 522-690 (RFRALFEQVA…NEFIHLTMNI (169 aa)) are domain IV. Residues Asp-574, Ser-576, Asn-578, Lys-580, Glu-585, Asp-604, Asp-606, Ser-608, Thr-610, and Glu-615 each coordinate Ca(2+).

It belongs to the peptidase C2 family. As to expression, expressed predominantly in stomach.

In terms of biological role, calcium-regulated non-lysosomal thiol-protease. This chain is Calpain-9 (CAPN9), found in Homo sapiens (Human).